A 104-amino-acid polypeptide reads, in one-letter code: MNSVPASAYLTLAIILFCIGLFGALTKRNTVIVLVCMELMLNAANLNLVAFSKLGFFPNLTGQIFSLFTMSVAAAEAAVGLAILIALYRNRTTVNIDEMDKLKG.

3 helical membrane-spanning segments follow: residues 4-24, 31-51, and 67-87; these read VPAS…LFGA, VIVL…LVAF, and LFTM…LIAL.

Belongs to the complex I subunit 4L family. NDH-1 is composed of 14 different subunits. Subunits NuoA, H, J, K, L, M, N constitute the membrane sector of the complex.

It localises to the cell membrane. It carries out the reaction a quinone + NADH + 5 H(+)(in) = a quinol + NAD(+) + 4 H(+)(out). NDH-1 shuttles electrons from NADH, via FMN and iron-sulfur (Fe-S) centers, to quinones in the respiratory chain. The immediate electron acceptor for the enzyme in this species is believed to be a menaquinone. Couples the redox reaction to proton translocation (for every two electrons transferred, four hydrogen ions are translocated across the cytoplasmic membrane), and thus conserves the redox energy in a proton gradient. This Bacillus cytotoxicus (strain DSM 22905 / CIP 110041 / 391-98 / NVH 391-98) protein is NADH-quinone oxidoreductase subunit K.